Here is a 386-residue protein sequence, read N- to C-terminus: Chaperone protein DnaJ (386 aa).

Residues 6–70 (DYYEVLGVDK…QKRAAYDQYG (65 aa)) enclose the J domain. A CR-type zinc finger spans residues 141-223 (GKDTEVSYKR…CHGTGHEKKT (83 aa)). Zn(2+) contacts are provided by cysteine 154, cysteine 157, cysteine 171, cysteine 174, cysteine 197, cysteine 200, cysteine 211, and cysteine 214. 4 CXXCXGXG motif repeats span residues 154–161 (CHTCGGNG), 171–178 (CHKCKGSG), 197–204 (CDVCHGTG), and 211–218 (CETCHGTG). Positions 363 to 386 (LTGQSTEEQQSEGFFDKMKDAFKK) are disordered. The span at 364–374 (TGQSTEEQQSE) shows a compositional bias: polar residues. A compositionally biased stretch (basic and acidic residues) spans 376-386 (FFDKMKDAFKK).

This sequence belongs to the DnaJ family. Homodimer. The cofactor is Zn(2+).

It is found in the cytoplasm. In terms of biological role, participates actively in the response to hyperosmotic and heat shock by preventing the aggregation of stress-denatured proteins and by disaggregating proteins, also in an autonomous, DnaK-independent fashion. Unfolded proteins bind initially to DnaJ; upon interaction with the DnaJ-bound protein, DnaK hydrolyzes its bound ATP, resulting in the formation of a stable complex. GrpE releases ADP from DnaK; ATP binding to DnaK triggers the release of the substrate protein, thus completing the reaction cycle. Several rounds of ATP-dependent interactions between DnaJ, DnaK and GrpE are required for fully efficient folding. Also involved, together with DnaK and GrpE, in the DNA replication of plasmids through activation of initiation proteins. In Tetragenococcus halophilus (Pediococcus halophilus), this protein is Chaperone protein DnaJ.